Consider the following 262-residue polypeptide: Small ribosomal subunit protein uS2 (262 aa).

It belongs to the universal ribosomal protein uS2 family.

The chain is Small ribosomal subunit protein uS2 from Azobacteroides pseudotrichonymphae genomovar. CFP2.